We begin with the raw amino-acid sequence, 117 residues long: G antigen 5 (117 aa).

Positions 1–117 are disordered; the sequence is MSWRGRSTYY…PEEGEKQSQC (117 aa). Composition is skewed to acidic residues over residues 32 to 45 and 87 to 96; these read FSDE…EEGE and ECEDGPDGQE. The segment covering 103 to 117 has biased composition (basic and acidic residues); it reads EEVKTPEEGEKQSQC.

This sequence belongs to the GAGE family. As to expression, expressed in a variety of tumor tissues but not in normal tissues, except testis.

This is G antigen 5 (GAGE5) from Homo sapiens (Human).